Consider the following 856-residue polypeptide: DNA mismatch repair protein MutS (856 aa).

623–630 is an ATP binding site; that stretch reads GPNMSGKS.

It belongs to the DNA mismatch repair MutS family.

In terms of biological role, this protein is involved in the repair of mismatches in DNA. It is possible that it carries out the mismatch recognition step. This protein has a weak ATPase activity. This chain is DNA mismatch repair protein MutS, found in Natronomonas pharaonis (strain ATCC 35678 / DSM 2160 / CIP 103997 / JCM 8858 / NBRC 14720 / NCIMB 2260 / Gabara) (Halobacterium pharaonis).